Consider the following 114-residue polypeptide: TYRO protein tyrosine kinase-binding protein (114 aa).

Residues 1-21 (MGALEPSWCLLFLPVLLTVGG) form the signal peptide. Residues 22–42 (LSPVQAQSDTFPRCDCSSVSP) lie on the Extracellular side of the membrane. The chain crosses the membrane as a helical span at residues 43–63 (GVLAGIVLGDLVLTLLIALAV). Asp52 lines the Ca(2+) pocket. Over 64 to 114 (YSLGRLVSRGQGTAEGTRKQHIAETESPYQELQGQRPEVYSDLNTQRQYYR) the chain is Cytoplasmic. A disordered region spans residues 74 to 107 (QGTAEGTRKQHIAETESPYQELQGQRPEVYSDLN). Residues 81 to 109 (RKQHIAETESPYQELQGQRPEVYSDLNTQ) form the ITAM domain. Residues Tyr92 and Tyr103 each carry the phosphotyrosine modification.

This sequence belongs to the TYROBP family. As to quaternary structure, homodimer; disulfide-linked. Homotrimer; disulfide-linked. Homotetramer; disulfide-linked. Homotrimers and homotetramers form when low levels of partner receptors are available and are competitive with assembly with interacting receptors. They may represent alternative oligomerization states or may be intermediates in the receptor assembly process. Binding of a metal cation aids in homooligomerization through coordination of the metal ion by the subunits of the oligomer. Interacts with TREM1. Interacts with TREM2. Interacts with TREM3. Interacts with CLECSF5. Interacts with CD300LB and CD300C2. Interacts with CD300E. Interacts (via ITAM domain) with SYK (via SH2 domains); activates SYK mediating neutrophil and macrophage integrin-mediated activation. Interacts (via transmembrane domain) with KLRK1 isoform 2 (via transmembrane domain); the interaction is required for KLRK1 NK cell surface expression and NK cell-mediated cytotoxicity. Interacts with KLRC2. Interacts with CD300H. Interacts with KLRD1. Interacts with KLRA4 and KLRA8. Post-translationally, tyrosine phosphorylated. Following ligand binding by associated receptors, tyrosine phosphorylated in the ITAM domain which leads to activation of additional tyrosine kinases and subsequent cell activation. Expressed on microglia (at protein level). Expressed on oligodendrocytes (at protein level). Expressed on macrophages and osteoclasts. Expressed on dendritic cells in liver, spleen, kidney and lung with highest levels in liver dendritic cells.

Its subcellular location is the cell membrane. Its function is as follows. Adapter protein which non-covalently associates with activating receptors found on the surface of a variety of immune cells to mediate signaling and cell activation following ligand binding by the receptors. TYROBP is tyrosine-phosphorylated in the ITAM domain following ligand binding by the associated receptors which leads to activation of additional tyrosine kinases and subsequent cell activation. Also has an inhibitory role in some cells. Non-covalently associates with activating receptors of the CD300 family to mediate cell activation. Also mediates cell activation through association with activating receptors of the CD200R family. Required for neutrophil activation mediated by integrin. Required for the activation of myeloid cells mediated by the CLEC5A/MDL1 receptor. Associates with natural killer (NK) cell receptors such as the KLRD1/KLRC2 heterodimer to mediate NK cell activation. Also associates non-covalently with the NK cell receptors KLRA4/LY49D and KLRA8/LY49H which leads to NK cell activation. Associates with TREM1 to mediate activation of neutrophils and monocytes. Associates with TREM2 on monocyte-derived dendritic cells to mediate up-regulation of chemokine receptor CCR7 and dendritic cell maturation and survival. Association with TREM2 mediates cytokine-induced formation of multinucleated giant cells which are formed by the fusion of macrophages. Stabilizes the TREM2 C-terminal fragment (TREM2-CTF) which is produced by TREM2 ectodomain shedding. In microglia, required with TREM2 for phagocytosis of apoptotic neurons. Required with ITGAM/CD11B in microglia to control production of microglial superoxide ions which promote the neuronal apoptosis that occurs during brain development. Promotes pro-inflammatory responses in microglia following nerve injury which accelerates degeneration of injured neurons. Positively regulates the expression of the IRAK3/IRAK-M kinase and IL10 production by liver dendritic cells and inhibits their T cell allostimulatory ability. Negatively regulates B cell proliferation. Required for CSF1-mediated osteoclast cytoskeletal organization. Positively regulates multinucleation during osteoclast development. This Mus musculus (Mouse) protein is TYRO protein tyrosine kinase-binding protein.